Consider the following 278-residue polypeptide: HTH-type transcriptional activator RhaS (278 aa).

Residues 174-272 enclose the HTH araC/xylS-type domain; that stretch reads NLLLAWLEDH…NWSPRDIRQG (99 aa). 2 consecutive DNA-binding regions (H-T-H motif) follow at residues 191–212 and 239–262; these read DAVAEQFSLSLRTLHRQLKQQT and VTDIAYRCGFSDSNHFSTLFRREF.

In terms of assembly, binds DNA as a dimer.

The protein localises to the cytoplasm. In terms of biological role, activates expression of the rhaBAD and rhaT operons. The polypeptide is HTH-type transcriptional activator RhaS (Escherichia coli (strain SE11)).